Here is a 310-residue protein sequence, read N- to C-terminus: MFKHVTVLLKETVDGLDIKPSGTYVDCTLGGGGHSSYLLSQLTDGGKLIAFDQDEIAIQNAKEKFSSYGEQFVTVKSNFRYLSEKLHELGITEVDGILFDLGVSSPQLDTPERGFSYHHDAPLDMRMDQDAPLTAYDVVNSWSYEQLVRIFFQYGEEKFSKQITRKIEAYRENKAIETTGELVELIKEGIPAPARRTGGHPAKRVFQAIRIAVNDELKVFEEALESAIDMVKPGGRVSVITFHSLEDRICKTTFKRNSTTPQLPQGLPIIPDEFKPKLKLITRKPILPSDIELEENNRARSAKLRIAEKR.

S-adenosyl-L-methionine is bound by residues 32–34, Asp-52, Phe-79, Asp-100, and Gln-107; that span reads GGH.

The protein belongs to the methyltransferase superfamily. RsmH family.

The protein localises to the cytoplasm. It carries out the reaction cytidine(1402) in 16S rRNA + S-adenosyl-L-methionine = N(4)-methylcytidine(1402) in 16S rRNA + S-adenosyl-L-homocysteine + H(+). Its function is as follows. Specifically methylates the N4 position of cytidine in position 1402 (C1402) of 16S rRNA. This chain is Ribosomal RNA small subunit methyltransferase H, found in Bacillus mycoides (strain KBAB4) (Bacillus weihenstephanensis).